We begin with the raw amino-acid sequence, 314 residues long: MPSELAMNNDELHVVMFPFLAFGHISPFVQLSNKLFSHGVHVTFLSAASNIPRIRSTLNLNPAINVISLKFPNGITNTAELPPHLAGNLIHALDLTQDQVKSLLLELKPHYVFFDFAQHWLPKLASEVGIKSVHFSVYSAISDAYITVPSRFADVEGRNITFEDLKKPPPGYPQNSNISLKAFEAMDFMFLFTRFGEKNLTGYERVLQSLGECSFIVFKTCKEIEGPYLDYIETQFRKPVLLSGPLVPEPSTDVLEEKWSKWLDGFPAKSVILCSFGSETFLSDYQIKELASGLELTGLPFILVLNFPSNLCQS.

As to expression, expressed in young leaves, flowers, pods and pod shells. Barely detected in seeds, roots and root nodules.

Its function is as follows. Has no flavonol 3-O-glucoside (1-&gt;6) rhamnosyltransferase activity in vitro. This chain is Inactive UDP-glycosyltransferase 79A6, found in Glycine max (Soybean).